Consider the following 217-residue polypeptide: Pyridoxine/pyridoxamine 5'-phosphate oxidase (217 aa).

Substrate contacts are provided by residues 13–16 and K71; that span reads RREY. Residues 66–71, 81–82, R87, K88, and Q110 each bind FMN; these read RIVLLK and YT. 3 residues coordinate substrate: Y128, R132, and S136. Residues 145–146 and W190 each bind FMN; that span reads QS. 196–198 is a substrate binding site; the sequence is RLH. FMN is bound at residue R200.

The protein belongs to the pyridoxamine 5'-phosphate oxidase family. As to quaternary structure, homodimer. FMN serves as cofactor.

It catalyses the reaction pyridoxamine 5'-phosphate + O2 + H2O = pyridoxal 5'-phosphate + H2O2 + NH4(+). The enzyme catalyses pyridoxine 5'-phosphate + O2 = pyridoxal 5'-phosphate + H2O2. It functions in the pathway cofactor metabolism; pyridoxal 5'-phosphate salvage; pyridoxal 5'-phosphate from pyridoxamine 5'-phosphate: step 1/1. It participates in cofactor metabolism; pyridoxal 5'-phosphate salvage; pyridoxal 5'-phosphate from pyridoxine 5'-phosphate: step 1/1. Its function is as follows. Catalyzes the oxidation of either pyridoxine 5'-phosphate (PNP) or pyridoxamine 5'-phosphate (PMP) into pyridoxal 5'-phosphate (PLP). In Yersinia enterocolitica serotype O:8 / biotype 1B (strain NCTC 13174 / 8081), this protein is Pyridoxine/pyridoxamine 5'-phosphate oxidase.